A 386-amino-acid chain; its full sequence is Beta-citrylglutamate synthase B (386 aa).

The ATP-grasp domain occupies 119–304 (FQELAGHGVP…VAGIIADYAA (186 aa)). Residues K158, 193–203 (QKYVKESHGRD), and R219 contribute to the ATP site. Mg(2+) is bound by residues D264, E277, and N279. Positions 264, 277, and 279 each coordinate Mn(2+). The disordered stretch occupies residues 325–359 (ASETSEPELGPPASTAVDNMSASSSSVDSDPESTE). A compositionally biased stretch (low complexity) spans 338–352 (STAVDNMSASSSSVD).

The protein belongs to the RimK family. Requires Mg(2+) as cofactor. It depends on Mn(2+) as a cofactor.

It localises to the cytoplasm. The catalysed reaction is citrate + L-glutamate + ATP = beta-citrylglutamate + ADP + phosphate + H(+). It catalyses the reaction N-acetyl-L-aspartate + L-glutamate + ATP = N-acetyl-L-aspartyl-L-glutamate + ADP + phosphate + H(+). Its function is as follows. Catalyzes the synthesis of beta-citryl-L-glutamate and N-acetyl-L-aspartyl-L-glutamate. Beta-citryl-L-glutamate is synthesized more efficiently than N-acetyl-L-aspartyl-L-glutamate. The chain is Beta-citrylglutamate synthase B (RIMKLB) from Homo sapiens (Human).